A 341-amino-acid polypeptide reads, in one-letter code: L-threonine 3-dehydrogenase (341 aa).

C38 lines the Zn(2+) pocket. Residues T40 and H43 each act as charge relay system in the active site. Residues H63, E64, C93, C96, C99, and C107 each coordinate Zn(2+). Residues I175, D195, R200, L262–I264, and I286–Y287 each bind NAD(+).

Belongs to the zinc-containing alcohol dehydrogenase family. In terms of assembly, homotetramer. The cofactor is Zn(2+).

The protein resides in the cytoplasm. The catalysed reaction is L-threonine + NAD(+) = (2S)-2-amino-3-oxobutanoate + NADH + H(+). It participates in amino-acid degradation; L-threonine degradation via oxydo-reductase pathway; glycine from L-threonine: step 1/2. Functionally, catalyzes the NAD(+)-dependent oxidation of L-threonine to 2-amino-3-ketobutyrate. The polypeptide is L-threonine 3-dehydrogenase (Yersinia pseudotuberculosis serotype O:1b (strain IP 31758)).